The chain runs to 93 residues: Protein S100-A8 (93 aa).

2 consecutive EF-hand domains span residues 12–47 (IIDVYHKYSLIKGNFHAVYRDDLKKLLETECPQYIR) and 46–81 (IRKKGADVWFKELDINTDGAVNFQEFLILVIKMGVA). His17 and His27 together coordinate Zn(2+). Asp33 lines the Ca(2+) pocket. Cys42 carries the S-nitrosocysteine modification. Positions 59, 61, 63, and 70 each coordinate Ca(2+). Residues His83 and His87 each coordinate Zn(2+).

Belongs to the S-100 family. In terms of assembly, homodimer. Preferentially exists as a heterodimer or heterotetramer with S100A9 known as calprotectin (S100A8/A9). S100A8 interacts with AGER, ATP2A2 and with the heterodimeric complex formed by TLR4 and LY96. Interacts with GAPDH. Calprotectin (S100A8/9) interacts with CEACAM3 and tubulin filaments in a calcium-dependent manner. Heterotetrameric calprotectin (S100A8/A9) interacts with ANXA6 and associates with tubulin filaments in activated monocytes. S100A8 and calprotectin (S100A8/9) interact with NCF2/P67PHOX, RAC1 and RAC2. Calprotectin (S100A8/9) interacts with CYBA and CYBB. Calprotectin (S100A8/9) interacts with NOS2 to form the iNOS-S100A8/A9 transnitrosylase complex; induced by LDL(ox). Calprotectin (S100A8/9) interacts with CD69. As to expression, calprotectin (S100A8/9) is predominantly expressed in myeloid cells. Except for inflammatory conditions, the expression is restricted to a specific stage of myeloid differentiation since both proteins are expressed in circulating neutrophils and monocytes but are absent in normal tissue macrophages and lymphocytes. Under chronic inflammatory conditions, such as psoriasis and malignant disorders, also expressed in the epidermis. Found in high concentrations at local sites of inflammation or in the serum of patients with inflammatory diseases such as rheumatoid, cystic fibrosis, inflammatory bowel disease, Crohn's disease, giant cell arteritis, cystic fibrosis, Sjogren's syndrome, systemic lupus erythematosus, and progressive systemic sclerosis. Involved in the formation and deposition of amyloids in the aging prostate known as corpora amylacea inclusions. Strongly up-regulated in many tumors, including gastric, esophageal, colon, pancreatic, bladder, ovarian, thyroid, breast and skin cancers.

The protein resides in the secreted. It localises to the cytoplasm. It is found in the cytoskeleton. Its subcellular location is the cell membrane. Calprotectin (S100A8/A9) activity on TLR4 signaling is inhibited by paquinimod. S100A8 is a calcium- and zinc-binding protein which plays a prominent role in the regulation of inflammatory processes and immune response. It can induce neutrophil chemotaxis and adhesion. Predominantly found as calprotectin (S100A8/A9) which has a wide plethora of intra- and extracellular functions. The intracellular functions include: facilitating leukocyte arachidonic acid trafficking and metabolism, modulation of the tubulin-dependent cytoskeleton during migration of phagocytes and activation of the neutrophilic NADPH-oxidase. Also participates in regulatory T-cell differentiation together with CD69. Activates NADPH-oxidase by facilitating the enzyme complex assembly at the cell membrane, transferring arachidonic acid, an essential cofactor, to the enzyme complex and S100A8 contributes to the enzyme assembly by directly binding to NCF2/P67PHOX. The extracellular functions involve pro-inflammatory, antimicrobial, oxidant-scavenging and apoptosis-inducing activities. Its pro-inflammatory activity includes recruitment of leukocytes, promotion of cytokine and chemokine production, and regulation of leukocyte adhesion and migration. Acts as an alarmin or a danger associated molecular pattern (DAMP) molecule and stimulates innate immune cells via binding to pattern recognition receptors such as Toll-like receptor 4 (TLR4) and receptor for advanced glycation endproducts (AGER). Binding to TLR4 and AGER activates the MAP-kinase and NF-kappa-B signaling pathways resulting in the amplification of the pro-inflammatory cascade. Has antimicrobial activity towards bacteria and fungi and exerts its antimicrobial activity probably via chelation of Zn(2+) which is essential for microbial growth. Can induce cell death via autophagy and apoptosis and this occurs through the cross-talk of mitochondria and lysosomes via reactive oxygen species (ROS) and the process involves BNIP3. Can regulate neutrophil number and apoptosis by an anti-apoptotic effect; regulates cell survival via ITGAM/ITGB and TLR4 and a signaling mechanism involving MEK-ERK. Its role as an oxidant scavenger has a protective role in preventing exaggerated tissue damage by scavenging oxidants. Can act as a potent amplifier of inflammation in autoimmunity as well as in cancer development and tumor spread. The iNOS-S100A8/A9 transnitrosylase complex directs selective inflammatory stimulus-dependent S-nitrosylation of GAPDH and probably multiple targets such as ANXA5, EZR, MSN and VIM by recognizing a [IL]-x-C-x-x-[DE] motif; S100A8 seems to contribute to S-nitrosylation site selectivity. Functionally, (Microbial infection) Upon infection by human coronavirus SARS-CoV-2, may induce expansion of aberrant immature neutrophils in a TLR4-dependent manner. This Homo sapiens (Human) protein is Protein S100-A8.